The sequence spans 293 residues: Bifunctional protein FolD (293 aa).

NADP(+)-binding positions include 165-167 (GRS), serine 190, and isoleucine 231.

The protein belongs to the tetrahydrofolate dehydrogenase/cyclohydrolase family. In terms of assembly, homodimer.

It catalyses the reaction (6R)-5,10-methylene-5,6,7,8-tetrahydrofolate + NADP(+) = (6R)-5,10-methenyltetrahydrofolate + NADPH. The catalysed reaction is (6R)-5,10-methenyltetrahydrofolate + H2O = (6R)-10-formyltetrahydrofolate + H(+). Its pathway is one-carbon metabolism; tetrahydrofolate interconversion. Functionally, catalyzes the oxidation of 5,10-methylenetetrahydrofolate to 5,10-methenyltetrahydrofolate and then the hydrolysis of 5,10-methenyltetrahydrofolate to 10-formyltetrahydrofolate. This Synechococcus sp. (strain CC9311) protein is Bifunctional protein FolD.